The following is a 486-amino-acid chain: Ribulose bisphosphate carboxylase large chain 1 (486 aa).

Asn125 and Thr175 together coordinate substrate. Lys177 (proton acceptor) is an active-site residue. Lys179 is a substrate binding site. Mg(2+)-binding residues include Lys203, Asp205, and Glu206. Lys203 is subject to N6-carboxylysine. His295 acts as the Proton acceptor in catalysis. Substrate contacts are provided by Arg296, His328, and Ser380.

This sequence belongs to the RuBisCO large chain family. Type I subfamily. Heterohexadecamer of 8 large chains and 8 small chains. The cofactor is Mg(2+).

It carries out the reaction 2 (2R)-3-phosphoglycerate + 2 H(+) = D-ribulose 1,5-bisphosphate + CO2 + H2O. It catalyses the reaction D-ribulose 1,5-bisphosphate + O2 = 2-phosphoglycolate + (2R)-3-phosphoglycerate + 2 H(+). Its function is as follows. RuBisCO catalyzes two reactions: the carboxylation of D-ribulose 1,5-bisphosphate, the primary event in carbon dioxide fixation, as well as the oxidative fragmentation of the pentose substrate. Both reactions occur simultaneously and in competition at the same active site. This is Ribulose bisphosphate carboxylase large chain 1 from Cereibacter sphaeroides (strain ATCC 17025 / ATH 2.4.3) (Rhodobacter sphaeroides).